A 475-amino-acid chain; its full sequence is Ribulose bisphosphate carboxylase large chain (475 aa).

A propeptide spanning residues 1–2 (MS) is cleaved from the precursor. Pro-3 carries the N-acetylproline modification. Lys-14 is subject to N6,N6,N6-trimethyllysine. Residues Asn-123 and Thr-173 each coordinate substrate. Lys-175 serves as the catalytic Proton acceptor. Lys-177 is a binding site for substrate. The Mg(2+) site is built by Lys-201, Asp-203, and Glu-204. Lys-201 is subject to N6-carboxylysine. The active-site Proton acceptor is His-294. Substrate-binding residues include Arg-295, His-327, and Ser-379.

This sequence belongs to the RuBisCO large chain family. Type I subfamily. Heterohexadecamer of 8 large chains and 8 small chains; disulfide-linked. The disulfide link is formed within the large subunit homodimers. It depends on Mg(2+) as a cofactor. The disulfide bond which can form in the large chain dimeric partners within the hexadecamer appears to be associated with oxidative stress and protein turnover.

The protein localises to the plastid. It localises to the chloroplast. It catalyses the reaction 2 (2R)-3-phosphoglycerate + 2 H(+) = D-ribulose 1,5-bisphosphate + CO2 + H2O. The catalysed reaction is D-ribulose 1,5-bisphosphate + O2 = 2-phosphoglycolate + (2R)-3-phosphoglycerate + 2 H(+). Its function is as follows. RuBisCO catalyzes two reactions: the carboxylation of D-ribulose 1,5-bisphosphate, the primary event in carbon dioxide fixation, as well as the oxidative fragmentation of the pentose substrate in the photorespiration process. Both reactions occur simultaneously and in competition at the same active site. This Angiopteris evecta (Mule's foot fern) protein is Ribulose bisphosphate carboxylase large chain.